A 274-amino-acid chain; its full sequence is Rhamnulose-1-phosphate aldolase (274 aa).

Glu-117 is a catalytic residue. His-141, His-143, and His-212 together coordinate Zn(2+).

It belongs to the aldolase class II family. RhaD subfamily. In terms of assembly, homotetramer. The cofactor is Zn(2+).

The protein localises to the cytoplasm. It catalyses the reaction L-rhamnulose 1-phosphate = (S)-lactaldehyde + dihydroxyacetone phosphate. Its pathway is carbohydrate degradation; L-rhamnose degradation; glycerone phosphate from L-rhamnose: step 3/3. In terms of biological role, catalyzes the reversible cleavage of L-rhamnulose-1-phosphate to dihydroxyacetone phosphate (DHAP) and L-lactaldehyde. The protein is Rhamnulose-1-phosphate aldolase of Yersinia pseudotuberculosis serotype IB (strain PB1/+).